The chain runs to 45 residues: Large ribosomal subunit protein bL34 (45 aa).

This sequence belongs to the bacterial ribosomal protein bL34 family.

The protein is Large ribosomal subunit protein bL34 of Paenarthrobacter aurescens (strain TC1).